A 389-amino-acid chain; its full sequence is Methane monooxygenase component A beta chain (389 aa).

In terms of assembly, m.capsulatus has two forms of methane monooxygenase, a soluble and a membrane-bound type. The soluble type consists of four components (A to D): protein A, comprising three chains, in an alpha-2, beta-2, gamma-2 configuration, is a nonheme iron protein containing an unusual mu-hydroxo bridge structure at its active site and interacts with both oxygen and methane.

The enzyme catalyses methane + NADH + O2 + H(+) = methanol + NAD(+) + H2O. It carries out the reaction methane + NADPH + O2 + H(+) = methanol + NADP(+) + H2O. In terms of biological role, responsible for the initial oxygenation of methane to methanol in methanotrophs. It also catalyzes the monohydroxylation of a variety of unactivated alkenes, alicyclic, aromatic and heterocyclic compounds. The protein is Methane monooxygenase component A beta chain (mmoY) of Methylococcus capsulatus (strain ATCC 33009 / NCIMB 11132 / Bath).